Consider the following 225-residue polypeptide: Uridylate kinase (225 aa).

Residue 9–10 (GS) coordinates ATP. Residue G46 coordinates UMP. ATP contacts are provided by G47 and R51. UMP is bound by residues D67 and 115-121 (THPAHTT). ATP is bound by residues T141, N142, Y147, and D150.

It belongs to the UMP kinase family. As to quaternary structure, homohexamer.

It localises to the cytoplasm. The enzyme catalyses UMP + ATP = UDP + ADP. The protein operates within pyrimidine metabolism; CTP biosynthesis via de novo pathway; UDP from UMP (UMPK route): step 1/1. Inhibited by UTP. Its function is as follows. Catalyzes the reversible phosphorylation of UMP to UDP. The sequence is that of Uridylate kinase from Methanococcus aeolicus (strain ATCC BAA-1280 / DSM 17508 / OCM 812 / Nankai-3).